A 243-amino-acid chain; its full sequence is UPF0502 protein RALTA_B0914 (243 aa).

Residues Met-1–Thr-10 show a composition bias toward polar residues. A disordered region spans residues Met-1 to Pro-23.

The protein belongs to the UPF0502 family.

This Cupriavidus taiwanensis (strain DSM 17343 / BCRC 17206 / CCUG 44338 / CIP 107171 / LMG 19424 / R1) (Ralstonia taiwanensis (strain LMG 19424)) protein is UPF0502 protein RALTA_B0914.